Here is a 423-residue protein sequence, read N- to C-terminus: Adenylosuccinate synthetase (423 aa).

Residues 12–18 (GDEGKGK) and 40–42 (GHT) contribute to the GTP site. The active-site Proton acceptor is Asp-13. 2 residues coordinate Mg(2+): Asp-13 and Gly-40. IMP contacts are provided by residues 13–16 (DEGK), 38–41 (NAGH), Thr-129, Arg-143, Gln-221, Thr-236, and Arg-300. His-41 serves as the catalytic Proton donor. 296 to 302 (AVTGRER) contacts substrate. GTP contacts are provided by residues Arg-302, 328 to 330 (KSD), and 408 to 410 (SVG).

This sequence belongs to the adenylosuccinate synthetase family. In terms of assembly, homodimer. Mg(2+) serves as cofactor.

It is found in the cytoplasm. The catalysed reaction is IMP + L-aspartate + GTP = N(6)-(1,2-dicarboxyethyl)-AMP + GDP + phosphate + 2 H(+). It functions in the pathway purine metabolism; AMP biosynthesis via de novo pathway; AMP from IMP: step 1/2. Its function is as follows. Plays an important role in the de novo pathway of purine nucleotide biosynthesis. Catalyzes the first committed step in the biosynthesis of AMP from IMP. In Phocaeicola vulgatus (strain ATCC 8482 / DSM 1447 / JCM 5826 / CCUG 4940 / NBRC 14291 / NCTC 11154) (Bacteroides vulgatus), this protein is Adenylosuccinate synthetase.